A 235-amino-acid polypeptide reads, in one-letter code: MSKQLIYSGKAKDIYTTEDENLIISTYKDQATAFNGVKKEQIAGKGVLNNQISSFIFEKLNAAGVATHFVEKLSDTEQLNKKVKIIPLEVVLRNYTAGSFSKRFGVDEGIALETPIVEFYYKNDDLDDPFINDEHVKFLQIADDQQIAYLKEEARRINELLKVWFAEIGLKLIDFKLEFGFDKDGKIILADEFSPDNCRLWDADGNHMDKDVFRRGLGELTDVYEIVWEKLQELK.

It belongs to the SAICAR synthetase family.

The enzyme catalyses 5-amino-1-(5-phospho-D-ribosyl)imidazole-4-carboxylate + L-aspartate + ATP = (2S)-2-[5-amino-1-(5-phospho-beta-D-ribosyl)imidazole-4-carboxamido]succinate + ADP + phosphate + 2 H(+). It functions in the pathway purine metabolism; IMP biosynthesis via de novo pathway; 5-amino-1-(5-phospho-D-ribosyl)imidazole-4-carboxamide from 5-amino-1-(5-phospho-D-ribosyl)imidazole-4-carboxylate: step 1/2. This chain is Phosphoribosylaminoimidazole-succinocarboxamide synthase, found in Streptococcus pneumoniae serotype 2 (strain D39 / NCTC 7466).